The chain runs to 315 residues: Glutamyl-Q tRNA(Asp) synthetase (315 aa).

L-glutamate-binding positions include 12-16 (RFAPS) and glutamate 48. A 'HIGH' region motif is present at residues 15–25 (PSPSGPLHFGS). Positions 104, 106, 124, and 128 each coordinate Zn(2+). Residues tyrosine 181 and arginine 199 each contribute to the L-glutamate site. The 'KMSKS' region motif lies at 237 to 241 (KLSKQ). Lysine 240 is a binding site for ATP.

Belongs to the class-I aminoacyl-tRNA synthetase family. GluQ subfamily. Requires Zn(2+) as cofactor.

Functionally, catalyzes the tRNA-independent activation of glutamate in presence of ATP and the subsequent transfer of glutamate onto a tRNA(Asp). Glutamate is transferred on the 2-amino-5-(4,5-dihydroxy-2-cyclopenten-1-yl) moiety of the queuosine in the wobble position of the QUC anticodon. The sequence is that of Glutamyl-Q tRNA(Asp) synthetase from Aromatoleum aromaticum (strain DSM 19018 / LMG 30748 / EbN1) (Azoarcus sp. (strain EbN1)).